The sequence spans 238 residues: Large ribosomal subunit protein uL2 (238 aa).

2 disordered regions span residues 1–34 and 197–238; these read MGKR…PPLS and VDHP…RRKR. A compositionally biased stretch (basic residues) spans 224–238; sequence KVGHIAARRTGRRKR.

This sequence belongs to the universal ribosomal protein uL2 family. Part of the 50S ribosomal subunit. Forms a bridge to the 30S subunit in the 70S ribosome.

Functionally, one of the primary rRNA binding proteins. Required for association of the 30S and 50S subunits to form the 70S ribosome, for tRNA binding and peptide bond formation. It has been suggested to have peptidyltransferase activity; this is somewhat controversial. Makes several contacts with the 16S rRNA in the 70S ribosome. The polypeptide is Large ribosomal subunit protein uL2 (Aeropyrum pernix (strain ATCC 700893 / DSM 11879 / JCM 9820 / NBRC 100138 / K1)).